Consider the following 306-residue polypeptide: Bifunctional protein FolD 1 (306 aa).

NADP(+) contacts are provided by residues 170 to 172 (GRG), Thr199, and Val240. Positions 285–306 (ARRTRSSRTPVRLPDSGAPAGR) are disordered.

Belongs to the tetrahydrofolate dehydrogenase/cyclohydrolase family. As to quaternary structure, homodimer.

The enzyme catalyses (6R)-5,10-methylene-5,6,7,8-tetrahydrofolate + NADP(+) = (6R)-5,10-methenyltetrahydrofolate + NADPH. The catalysed reaction is (6R)-5,10-methenyltetrahydrofolate + H2O = (6R)-10-formyltetrahydrofolate + H(+). It functions in the pathway one-carbon metabolism; tetrahydrofolate interconversion. In terms of biological role, catalyzes the oxidation of 5,10-methylenetetrahydrofolate to 5,10-methenyltetrahydrofolate and then the hydrolysis of 5,10-methenyltetrahydrofolate to 10-formyltetrahydrofolate. This Salinispora tropica (strain ATCC BAA-916 / DSM 44818 / JCM 13857 / NBRC 105044 / CNB-440) protein is Bifunctional protein FolD 1.